The chain runs to 642 residues: Probable serine/threonine-protein kinase drkA (642 aa).

The first 23 residues, 1-23 (MKKLPFLIIIIYIFLILISISSS), serve as a signal peptide directing secretion. The Extracellular portion of the chain corresponds to 24–322 (IDYNYNNDID…KPTISLLKKY (299 aa)). Positions 106 to 128 (SENSGSGSNSNSNSKNTDSSTGP) are enriched in low complexity. A disordered region spans residues 106–136 (SENSGSGSNSNSNSKNTDSSTGPTPSPISIN). Asn136, Asn140, Asn158, Asn244, and Asn271 each carry an N-linked (GlcNAc...) asparagine glycan. Residues 323-343 (LIIGFSIVGGLLIIGGCFLLI) form a helical membrane-spanning segment. Over 344–642 (RNRYRSSGYY…SDLQYVRQQL (299 aa)) the chain is Cytoplasmic. The Protein kinase domain maps to 374-627 (IKIGVRIGKG…EQCLERLESI (254 aa)). ATP is bound by residues 380–388 (IGKGNYGEV) and Lys401. The Proton acceptor role is filled by Asp497.

It belongs to the protein kinase superfamily. TKL Ser/Thr protein kinase family.

It localises to the membrane. It carries out the reaction L-seryl-[protein] + ATP = O-phospho-L-seryl-[protein] + ADP + H(+). The enzyme catalyses L-threonyl-[protein] + ATP = O-phospho-L-threonyl-[protein] + ADP + H(+). This is Probable serine/threonine-protein kinase drkA (drkA) from Dictyostelium discoideum (Social amoeba).